Consider the following 1294-residue polypeptide: uncharacterized protein (1294 aa).

The Extracellular segment spans residues 1 to 375 (MSQQENGDVA…RNFKLNFSDY (375 aa)). Positions 28–287 (LHVRDLSIVA…FESIGYHVPQ (260 aa)) constitute an ABC transporter 1 domain. Residue N41 is glycosylated (N-linked (GlcNAc...) asparagine). 62–69 (GGSGSGKT) serves as a coordination point for ATP. N86, N101, N151, N341, N349, and N371 each carry an N-linked (GlcNAc...) asparagine glycan. Residues 376-396 (VTLISTFAEPLIIGTVCGWIY) traverse the membrane as a helical segment. The Cytoplasmic segment spans residues 397–495 (YKPDKSSIGG…EADARKFFYQ (99 aa)). A helical transmembrane segment spans residues 496 to 516 (FAVVFLCQLSCSGLSMLSVAV). Topologically, residues 517-530 (SRDFSKASLVGNMT) are extracellular. The N-linked (GlcNAc...) asparagine glycan is linked to N528. The helical transmembrane segment at 531-551 (FTVLSMGCGFFVNAKVMPVYV) threads the bilayer. Residues 552-604 (RWIKYIAFTWYSFGTLMSSTFTNSYCTTDNLDECLGNQILEVYGFPRNWITVP) are Cytoplasmic-facing. A helical membrane pass occupies residues 605 to 625 (AVVLLCWSVGYFVVGAIILYL). The Extracellular segment spans residues 626-1038 (HKIDITLQNE…TTTRRSFDSL (413 aa)). The ABC transporter 2 domain occupies 679 to 941 (IKLEDIDLRV…FTELGYNCPS (263 aa)). 727-734 (GPSGSGKS) is an ATP binding site. Residue N983 is glycosylated (N-linked (GlcNAc...) asparagine). A helical transmembrane segment spans residues 1039 to 1059 (MARIAQIPGLGVIFALFFAPV). Residues 1060 to 1120 (KHNYTSISNR…PFFLAYMTLE (61 aa)) lie on the Cytoplasmic side of the membrane. A helical membrane pass occupies residues 1121–1141 (LPLSALASVLYAVFTVLACGL). At 1142–1266 (PRTAGNFFAT…YGLVRNTQKY (125 aa)) the chain is on the extracellular side. The helical transmembrane segment at 1267 to 1287 (LGIIVCVAIIYRLIAFFILKA) threads the bilayer. Topologically, residues 1288–1294 (KLEWIKW) are cytoplasmic.

Belongs to the ABC transporter superfamily. ABCG family. PDR (TC 3.A.1.205) subfamily.

It localises to the membrane. This is an uncharacterized protein from Saccharomyces cerevisiae (strain ATCC 204508 / S288c) (Baker's yeast).